The primary structure comprises 411 residues: Argininosuccinate lyase (411 aa).

The protein belongs to the lyase 1 family. Argininosuccinate lyase subfamily.

The protein resides in the cytoplasm. It carries out the reaction 2-(N(omega)-L-arginino)succinate = fumarate + L-arginine. Its pathway is amino-acid biosynthesis; L-arginine biosynthesis; L-arginine from L-ornithine and carbamoyl phosphate: step 3/3. The protein is Argininosuccinate lyase of Legionella pneumophila (strain Paris).